The sequence spans 348 residues: Histone PARylation factor 1 (348 aa).

The span at 1–10 (MAGRGKRKPR) shows a compositional bias: basic residues. Residues 1-38 (MAGRGKRKPRSLPQTETPNGEVKKAKEGLKDDKTSVGE) are disordered. Over residues 21–38 (EVKKAKEGLKDDKTSVGE) the composition is skewed to basic and acidic residues. Residues 170–200 (LQKKKKEKRQQKDDAALNRLEEDLKREAERL) are a coiled coil. Catalysis depends on Glu285, which acts as the Proton donor.

Belongs to the HPF1 family. Interacts with PARP1 (via the PARP catalytic domain). Interacts with PARP2 (via the PARP catalytic domain). Interacts with core nucleosomes in a parp1- and parp2-dependent manner. As to expression, in adult, mainly expressed in gonads.

Its subcellular location is the chromosome. It is found in the nucleus. Functionally, cofactor for serine ADP-ribosylation that confers serine specificity on parp1 and parp2 and plays a key role in DNA damage response. Initiates the repair of double-strand DNA breaks: recruited to DNA damage sites by parp1 and parp2 and switches the amino acid specificity of parp1 and parp2 from aspartate or glutamate to serine residues, licensing serine ADP-ribosylation of target proteins. Serine ADP-ribosylation of target proteins, such as histones, promotes decompaction of chromatin and the recruitment of repair factors leading to the reparation of DNA strand breaks. Serine ADP-ribosylation of proteins constitutes the primary form of ADP-ribosylation of proteins in response to DNA damage. Hpf1 acts by completing the active site of parp1 and parp2: forms a composite active site composed of residues from Hpf1 and parp1 or parp2. While hpf1 promotes the initiation of serine ADP-ribosylation, it restricts the polymerase activity of parp1 and parp2 in order to limit the length of poly-ADP-ribose chains. Hpf1 also promotes tyrosine ADP-ribosylation, probably by conferring tyrosine specificity on parp1. The sequence is that of Histone PARylation factor 1 from Danio rerio (Zebrafish).